The sequence spans 162 residues: Phenazine biosynthesis protein PhzA1 (162 aa).

It belongs to the PhzA/PhzB family.

Its pathway is antibiotic biosynthesis; phenazine biosynthesis. Its function is as follows. Involved in the biosynthesis of the antibiotic phenazine, a nitrogen-containing heterocyclic molecule. PhzA1 (operon phzA1B1C1E1F1G1) has a role in the biosynthesis of the phenazine during planktonic growth. In Pseudomonas aeruginosa (strain ATCC 15692 / DSM 22644 / CIP 104116 / JCM 14847 / LMG 12228 / 1C / PRS 101 / PAO1), this protein is Phenazine biosynthesis protein PhzA1.